Consider the following 158-residue polypeptide: Low molecular weight phosphotyrosine protein phosphatase (158 aa).

Ala-2 is subject to N-acetylalanine. The active-site Nucleophile is Cys-13. Arg-19 is a catalytic residue. Catalysis depends on Asp-130, which acts as the Proton donor. Residues Tyr-132 and Tyr-133 each carry the phosphotyrosine modification.

The protein belongs to the low molecular weight phosphotyrosine protein phosphatase family.

The protein resides in the cytoplasm. It catalyses the reaction O-phospho-L-tyrosyl-[protein] + H2O = L-tyrosyl-[protein] + phosphate. The enzyme catalyses a phosphate monoester + H2O = an alcohol + phosphate. Its function is as follows. Acts on tyrosine phosphorylated proteins, low-MW aryl phosphates and natural and synthetic acyl phosphates. This chain is Low molecular weight phosphotyrosine protein phosphatase (ACP1), found in Gallus gallus (Chicken).